The following is a 686-amino-acid chain: Delta-like protein 4 (686 aa).

A signal peptide spans 1–27 (MTPGSRSACRWALLLLAVLWPQQRAAG). Residues 28-530 (SGIFQLRLQE…PVGLPPSFPW (503 aa)) lie on the Extracellular side of the membrane. 2 disulfides stabilise this stretch: Cys-51–Cys-55 and Cys-62–Cys-75. N-linked (GlcNAc...) asparagine glycans are attached at residues Asn-79, Asn-109, and Asn-162. The DSL domain occupies 174-218 (VVCSDNYYGDSCSRLCKKRDDHFGHYECQPDGSLSCLPGWTGKYC). Residues Cys-176 and Cys-185 are joined by a disulfide bond. Interaction with Notch1 stretches follow at residues 186–188 (SRL) and 192–196 (RDDHF). 26 disulfides stabilise this stretch: Cys-189–Cys-201, Cys-209–Cys-218, Cys-223–Cys-234, Cys-227–Cys-240, Cys-242–Cys-251, Cys-254–Cys-265, Cys-260–Cys-271, Cys-273–Cys-282, Cys-289–Cys-301, Cys-295–Cys-311, Cys-313–Cys-322, Cys-329–Cys-340, Cys-334–Cys-349, Cys-351–Cys-360, Cys-367–Cys-378, Cys-372–Cys-389, Cys-391–Cys-400, Cys-407–Cys-418, Cys-412–Cys-427, Cys-429–Cys-438, Cys-445–Cys-456, Cys-450–Cys-465, Cys-467–Cys-476, Cys-485–Cys-496, Cys-490–Cys-507, and Cys-509–Cys-518. EGF-like domains are found at residues 219–252 (DQPICLSGCHEQNGYCSKPDECNCRPGWQGPLCN), 256–283 (PHNGCRHGTCTIPWQCACDEGWGGLFCD), 285–323 (DLNYCTHHSPCKNGSTCSNSGPRGYTCTCLPGYTGEHCE), 325–361 (ELSKCASNPCRNGGSCKDHENSYHCLCPPGYYGQHCE), 363–401 (STLTCADSPCFNGGSCRERNQGASYACECPPNFTGSNCE), 403–439 (KVDRCTSNPCANGGQCLNRGPSRTCRCRPGFTGTHCE), 441–477 (HISDCARSPCAHGGTCHDLENGPVCTCPAGFSGRRCE), and 481–519 (TNDACASGPCFNGATCYTGLSPNNFVCNCPYGFVGSRCE). A helical membrane pass occupies residues 531 to 551 (VAVSLGVGLVVLLVLLVMVAV). At 552-686 (AVRQLRLRRP…RNECVIATEV (135 aa)) the chain is on the cytoplasmic side.

As to quaternary structure, interacts with NOTCH4. Interacts (via N-terminal DSL and MNNL domains) with NOTCH1 (via EGF-like domains).

It is found in the cell membrane. Functionally, involved in the Notch signaling pathway as Notch ligand. Activates NOTCH1 and NOTCH4. Involved in angiogenesis; negatively regulates endothelial cell proliferation and migration and angiogenic sprouting. Essential for retinal progenitor proliferation. Required for suppressing rod fates in late retinal progenitors as well as for proper generation of other retinal cell types. During spinal cord neurogenesis, inhibits V2a interneuron fate. In Rattus norvegicus (Rat), this protein is Delta-like protein 4.